A 424-amino-acid chain; its full sequence is G1/S-specific cyclin-E (424 aa).

Residues 1-25 (MSRRSGRLQSRQDNQPLTECISDEN) form a disordered region. The span at 7–17 (RLQSRQDNQPL) shows a compositional bias: polar residues. Thr-411 is subject to Phosphothreonine.

This sequence belongs to the cyclin family. Cyclin E subfamily. In terms of assembly, interacts with a member of the CDK2/CDK protein kinases to form a serine/threonine kinase holoenzyme complex. The cyclin subunit imparts substrate specificity to the complex.

It is found in the nucleus. Its function is as follows. Essential for the control of the cell cycle at the G1/S (start) transition. The protein is G1/S-specific cyclin-E (CYCE) of Hemicentrotus pulcherrimus (Sea urchin).